We begin with the raw amino-acid sequence, 879 residues long: RNA-directed RNA polymerase (879 aa).

Gly-259–Thr-266 provides a ligand contact to GTP. The RdRp catalytic domain occupies Leu-398 to Ala-598. A disordered region spans residues Gly-846–Gln-879.

In terms of assembly, interacts with VP3 in the cytoplasm. In terms of processing, may exist in multiple phosphorylated forms.

It is found in the virion. The catalysed reaction is RNA(n) + a ribonucleoside 5'-triphosphate = RNA(n+1) + diphosphate. RNA-dependent RNA polymerase which is found both free and covalently attached to the genomic RNA. May also contain guanylyl and methyl transferase activities. The sequence is that of RNA-directed RNA polymerase (VP1) from Gallus gallus (Chicken).